Here is a 496-residue protein sequence, read N- to C-terminus: Aldehyde dehydrogenase 1A1 (496 aa).

N6-acetyllysine occurs at positions 86 and 123. NAD(+) is bound by residues 162 to 165 (IPWN), 188 to 191 (KPAE), 221 to 222 (GP), and 241 to 242 (GS). The residue at position 247 (Lys247) is an N6-acetyllysine. Glu264 serves as the catalytic Proton acceptor. An NAD(+)-binding site is contributed by 264-266 (ELG). Catalysis depends on Cys298, which acts as the Nucleophile. The segment at 331–496 (LAPEVNQGPQ…VTVKISQKNS (166 aa)) is mediates interaction with PRMT3. Residue 344 to 348 (EQYNK) coordinates NAD(+). An N6-acetyllysine mark is found at Lys348 and Lys362. 395-397 (EIF) contributes to the NAD(+) binding site. Lys405 carries the post-translational modification N6-acetyllysine. Phosphoserine is present on Ser408. 3 positions are modified to N6-acetyllysine: Lys414, Lys430, and Lys490.

It belongs to the aldehyde dehydrogenase family. In terms of assembly, homotetramer. Interacts with PRMT3; the interaction is direct, inhibits ALDH1A1 aldehyde dehydrogenase activity and is independent of the methyltransferase activity of PRMT3. Post-translationally, the N-terminus is blocked most probably by acetylation.

It is found in the cytoplasm. The protein resides in the cytosol. The protein localises to the cell projection. It localises to the axon. It carries out the reaction an aldehyde + NAD(+) + H2O = a carboxylate + NADH + 2 H(+). It catalyses the reaction all-trans-retinal + NAD(+) + H2O = all-trans-retinoate + NADH + 2 H(+). The enzyme catalyses 9-cis-retinal + NAD(+) + H2O = 9-cis-retinoate + NADH + 2 H(+). The catalysed reaction is 11-cis-retinal + NAD(+) + H2O = 11-cis-retinoate + NADH + 2 H(+). It carries out the reaction 13-cis-retinal + NAD(+) + H2O = 13-cis-retinoate + NADH + 2 H(+). It catalyses the reaction (E)-4-hydroxynon-2-enal + NAD(+) + H2O = (E)-4-hydroxynon-2-enoate + NADH + 2 H(+). The enzyme catalyses malonaldehyde + NAD(+) + H2O = 3-oxopropanoate + NADH + 2 H(+). The catalysed reaction is hexanal + NAD(+) + H2O = hexanoate + NADH + 2 H(+). It carries out the reaction propanal + NAD(+) + H2O = propanoate + NADH + 2 H(+). It catalyses the reaction 3-deoxyglucosone + NAD(+) + H2O = 2-dehydro-3-deoxy-D-gluconate + NADH + 2 H(+). The enzyme catalyses acetaldehyde + NAD(+) + H2O = acetate + NADH + 2 H(+). The catalysed reaction is benzaldehyde + NAD(+) + H2O = benzoate + NADH + 2 H(+). It carries out the reaction 4-aminobutanal + NAD(+) + H2O = 4-aminobutanoate + NADH + 2 H(+). The protein operates within cofactor metabolism; retinol metabolism. Cytosolic dehydrogenase that catalyzes the irreversible oxidation of a wide range of aldehydes to their corresponding carboxylic acid. Functions downstream of retinol dehydrogenases and catalyzes the oxidation of retinaldehyde into retinoic acid, the second step in the oxidation of retinol/vitamin A into retinoic acid. This pathway is crucial to control the levels of retinol and retinoic acid, two important molecules which excess can be teratogenic and cytotoxic. Also oxidizes aldehydes resulting from lipid peroxidation like (E)-4-hydroxynon-2-enal/HNE, malonaldehyde and hexanal that form protein adducts and are highly cytotoxic. By participating for instance to the clearance of (E)-4-hydroxynon-2-enal/HNE in the lens epithelium prevents the formation of HNE-protein adducts and lens opacification. Functions also downstream of fructosamine-3-kinase in the fructosamine degradation pathway by catalyzing the oxidation of 3-deoxyglucosone, the carbohydrate product of fructosamine 3-phosphate decomposition, which is itself a potent glycating agent that may react with lysine and arginine side-chains of proteins. Also has an aminobutyraldehyde dehydrogenase activity and is probably part of an alternative pathway for the biosynthesis of GABA/4-aminobutanoate in midbrain, thereby playing a role in GABAergic synaptic transmission. The polypeptide is Aldehyde dehydrogenase 1A1 (Oryctolagus cuniculus (Rabbit)).